Here is a 434-residue protein sequence, read N- to C-terminus: 3-phosphoshikimate 1-carboxyvinyltransferase (434 aa).

3-phosphoshikimate is bound by residues Lys-22, Ser-23, and Arg-27. Lys-22 contributes to the phosphoenolpyruvate binding site. Phosphoenolpyruvate is bound by residues Gly-94 and Arg-122. 3-phosphoshikimate contacts are provided by Ser-167, Gln-169, Asp-314, and Lys-341. Gln-169 provides a ligand contact to phosphoenolpyruvate. Asp-314 acts as the Proton acceptor in catalysis. Positions 345 and 391 each coordinate phosphoenolpyruvate.

This sequence belongs to the EPSP synthase family. In terms of assembly, monomer.

It is found in the cytoplasm. The catalysed reaction is 3-phosphoshikimate + phosphoenolpyruvate = 5-O-(1-carboxyvinyl)-3-phosphoshikimate + phosphate. It functions in the pathway metabolic intermediate biosynthesis; chorismate biosynthesis; chorismate from D-erythrose 4-phosphate and phosphoenolpyruvate: step 6/7. In terms of biological role, catalyzes the transfer of the enolpyruvyl moiety of phosphoenolpyruvate (PEP) to the 5-hydroxyl of shikimate-3-phosphate (S3P) to produce enolpyruvyl shikimate-3-phosphate and inorganic phosphate. The polypeptide is 3-phosphoshikimate 1-carboxyvinyltransferase (Leuconostoc mesenteroides subsp. mesenteroides (strain ATCC 8293 / DSM 20343 / BCRC 11652 / CCM 1803 / JCM 6124 / NCDO 523 / NBRC 100496 / NCIMB 8023 / NCTC 12954 / NRRL B-1118 / 37Y)).